A 33-amino-acid chain; its full sequence is Photosystem II reaction center protein Psb30 (33 aa).

Residues 5–25 traverse the membrane as a helical segment; sequence LALTLVSLVLVVSAGPLVVVL.

Belongs to the Psb30/Ycf12 family. As to quaternary structure, PSII is composed of 1 copy each of membrane proteins PsbA, PsbB, PsbC, PsbD, PsbE, PsbF, PsbH, PsbI, PsbJ, PsbK, PsbL, PsbM, PsbT, PsbX, PsbY, PsbZ, Psb30/Ycf12, peripheral proteins of the oxygen-evolving complex and a large number of cofactors. It forms dimeric complexes.

It localises to the plastid. It is found in the chloroplast thylakoid membrane. A core subunit of photosystem II (PSII), required for optimal photosynthesis, probably helps stabilize the reaction center. The protein is Photosystem II reaction center protein Psb30 of Chlamydomonas reinhardtii (Chlamydomonas smithii).